The chain runs to 214 residues: Cdc42 effector protein 2 (214 aa).

An N-acetylserine modification is found at Ser-2. Residues 30–44 form the CRIB domain; it reads ISPPLGDFRHTIHIG. 5 positions are modified to phosphoserine: Ser-31, Ser-101, Ser-137, Ser-141, and Ser-145. The tract at residues 119–177 is disordered; the sequence is LTLPTAQAPPKPPRLHLESPQPSPQPSPQGAGNVDVWRIPEAGSPHNGMSPEPEAEEPF.

It belongs to the BORG/CEP family. In terms of assembly, interacts with CDC42 and RHOQ in a GTP-dependent manner, and with SEPT7.

Its subcellular location is the endomembrane system. It localises to the cytoplasm. It is found in the cytoskeleton. Functionally, probably involved in the organization of the actin cytoskeleton. May act downstream of CDC42 to induce actin filament assembly leading to cell shape changes. Induces pseudopodia formation in fibroblasts in a CDC42-dependent manner. The chain is Cdc42 effector protein 2 (Cdc42ep2) from Mus musculus (Mouse).